Reading from the N-terminus, the 544-residue chain is Chaperonin GroEL 3 (544 aa).

Residues 30-33 (TLGP), lysine 51, 87-91 (DGTTT), glycine 415, and aspartate 496 contribute to the ATP site.

It belongs to the chaperonin (HSP60) family. As to quaternary structure, forms a cylinder of 14 subunits composed of two heptameric rings stacked back-to-back. Interacts with the co-chaperonin GroES.

Its subcellular location is the cytoplasm. It catalyses the reaction ATP + H2O + a folded polypeptide = ADP + phosphate + an unfolded polypeptide.. Together with its co-chaperonin GroES, plays an essential role in assisting protein folding. The GroEL-GroES system forms a nano-cage that allows encapsulation of the non-native substrate proteins and provides a physical environment optimized to promote and accelerate protein folding. The protein is Chaperonin GroEL 3 of Rhizobium meliloti (strain 1021) (Ensifer meliloti).